A 148-amino-acid polypeptide reads, in one-letter code: Putative nickel-responsive regulator (148 aa).

The Ni(2+) site is built by His-88, His-99, His-101, and Cys-107.

This sequence belongs to the transcriptional regulatory CopG/NikR family. It depends on Ni(2+) as a cofactor.

In terms of biological role, transcriptional regulator. This chain is Putative nickel-responsive regulator, found in Helicobacter pylori (strain Shi470).